The sequence spans 94 residues: uncharacterized protein (94 aa).

The tract at residues 1 to 23 (MVLLAGTRPQGGEARCMIPPPPS) is disordered.

This is an uncharacterized protein from Homo sapiens (Human).